An 814-amino-acid chain; its full sequence is Glycosyltransferase GlyD (814 aa).

The segment at 1–264 (MNKTIVLAGD…SQILQHHMGE (264 aa)) is GT8 domain. Residues 8-13 (AGDRNY) and 102-103 (DS) contribute to the UDP site. Asp102, Asp104, and His226 together coordinate Mn(2+). 226 to 232 (HFTTYRK) contacts UDP. Residues 542–814 (EKPLDIIQVK…NSQIVARILN (273 aa)) form a GT-D domain region.

It in the N-terminal section; belongs to the glycosyltransferase 8 family. This sequence in the C-terminal section; belongs to the GT-D family.

The protein operates within protein modification; protein glycosylation. Involved in the polymorphic O-glycosylation of the serine-rich repeat protein PsrP. Catalyzes the third step in glycosylation PsrP in this bacteria. Transfers glucose from UDP-glucose to the terminal glucose moiety of already-glycosylated PsrP (using truncated substrates with PsrP SSR1-GlcNAc-Glc); the C-terminal GT-D domain is sufficient for this reaction in vitro. Also transfers galactose from UDP-galactose to the terminal glucose moiety of already-glycosylated PsrP; the C-terminal GT-D domain is also sufficient for this reaction in vitro. Activity is much higher with UDP-glucose, and the enzyme has a very marked preference for PsrP substrate that has already been modified by GlcNAc and glucose. In vitro has hydrolytic activity against UDP-galactose and to a lesser extent against UDP-glucose. In terms of biological role, also catalyzes the fourth step in glycosylation of PsrP in this bacteria. Can transfer the sugar from both UDP-glucose and UDP-galactose to the terminal sugar moiety of PsrP-GlcNAc-Glc-Glc and PsrP-GlcNAc-Glc-Gal; the C-terminal GT-D domain is also sufficient for this reaction in vitro (using truncated substrates with glycosylated PsrP SSR1). The N-terminal GT-D domain can transfer galactose from UDP-galactose to PsrP-GlcNAc-Glc-Gal or PsrP-GlcNAc-Glc-Glc in the fourth step. The polypeptide is Glycosyltransferase GlyD (Streptococcus pneumoniae serotype 4 (strain ATCC BAA-334 / TIGR4)).